The chain runs to 455 residues: GTPase Der (455 aa).

EngA-type G domains are found at residues 4-169 and 178-355; these read PIVA…PKDQ and LRVS…GQHQ. GTP-binding positions include 10–17, 57–61, 120–123, 184–191, 233–237, and 298–301; these read GRPNVGKS, DTGGL, NKLE, DTAGI, and NKWD. The region spanning 356–441 is the KH-like domain; it reads RRVSTSVLNE…PVRFIFRGKP (86 aa).

The protein belongs to the TRAFAC class TrmE-Era-EngA-EngB-Septin-like GTPase superfamily. EngA (Der) GTPase family. Associates with the 50S ribosomal subunit.

Functionally, GTPase that plays an essential role in the late steps of ribosome biogenesis. This chain is GTPase Der, found in Gloeobacter violaceus (strain ATCC 29082 / PCC 7421).